A 264-amino-acid polypeptide reads, in one-letter code: Short chain dehydrogenase/reductase nsrJ (264 aa).

Residues Ile-24, Asp-70, Asn-97, and Arg-130 each contribute to the NADP(+) site. Residues Ser-146 and Ser-147 each act as proton donor in the active site. NADP(+)-binding residues include Tyr-161, Lys-165, and Thr-196. The active-site Proton acceptor is the Tyr-161. The active-site Lowers pKa of active site Tyr is the Lys-165.

It belongs to the short-chain dehydrogenases/reductases (SDR) family.

Its pathway is secondary metabolite biosynthesis. Short chain dehydrogenase/reductase; part of the gene cluster that mediates the biosynthesis of the tetrahydroxanthone dimer neosartorin, which exhibits antibacterial activity. The two different monomeric units appear to be synthesized by the same set of enzymes, among which the Baeyer-Villiger monooxygenase nsrF is the key enzyme for the divergence of the biosynthetic routes. The pathway begins with the synthesis of atrochrysone thioester by the polyketide synthase nsrB. The atrochrysone carboxyl ACP thioesterase nsrC then breaks the thioester bond and releases the atrochrysone carboxylic acid from AacuL. Atrochrysone carboxylic acid is decarboxylated by the decarboxylase nsrE, and oxidized by the anthrone oxygenase nsrD to yield emodin. Emodin is then reduced to emodin hydroquinone by the oxidoreductase nsrR. A-ring reduction by the short chain dehydrogenase nsrJ, dehydration by the scytalone dehydratase-like protein nsrI and probable spontaneous re-oxidation, results in overall deoxygenation to chrysophanol. The Baeyer-Villiger monooxygenase nsrF accepts chrysophanol as a substrate to insert one oxygen atom at two different positions to yield the precursors of both monomric units. NsrF is promiscuous/flexible in interacting with the 2 (non methylated and methylated) aromatic rings of chrysophanol, thus diverging the biosynthetic pathway at this point. After the hydrolysis of the lactones, methylesterification by the methyltransferase nsrG yields respectively moniliphenone and 2,2',6'-trihydroxy-4-methyl-6-methoxya-cyldiphenylmethanone. The next steps are the hydroxylation by the FAD-dependent monooxygenase nsrK, followed by isomerization by the monooxygenase nsrQ. The short chain dehydrogenase/reductase nsrO then catalyzes the C-5 ketoreduction to give the xanthone skeleton of blennolide C and 5-acetylblennolide A. The acetyltransferase nsrL has a strict substrate specificity and uses only blennolide A but not blennolide C to yield 5-acetylblennolide A as the single-acetylated product. In the final step of the biosynthesis, the heterodimerization of the 2 xanthones, blennolide C and 5-acetylblennolide A, is catalyzed by the cytochrome P450 monooxygenase nsrP. NsrP can utilize at least three different xanthones as its substrates to perform the dimerization reaction. This Aspergillus novofumigatus (strain IBT 16806) protein is Short chain dehydrogenase/reductase nsrJ.